A 354-amino-acid chain; its full sequence is Glycerol-3-phosphate dehydrogenase [NAD(+)], glycosomal (354 aa).

NAD(+) contacts are provided by residues 15–20, Phe90, Lys118, and Ala150; that span reads GSGAFG. Lys118 contacts substrate. Catalysis depends on Lys203, which acts as the Proton acceptor. Residues Arg267 and Glu293 each contribute to the NAD(+) site. Position 267-268 (267-268) interacts with substrate; that stretch reads RN. The Microbody targeting signal motif lies at 352 to 354; sequence SKM.

Belongs to the NAD-dependent glycerol-3-phosphate dehydrogenase family.

It localises to the glycosome. The catalysed reaction is sn-glycerol 3-phosphate + NAD(+) = dihydroxyacetone phosphate + NADH + H(+). This chain is Glycerol-3-phosphate dehydrogenase [NAD(+)], glycosomal (GPD), found in Trypanosoma brucei brucei.